Consider the following 181-residue polypeptide: MMQPLYLVGPRGCGKTTIGMALAQATGFRFADTDRWLQSHVQMSVADIVEKEGWGGFRARETAALEAVSAPSTVVATGGGIILTDYNRRYMHRVGVVIYLCAPVSTLVNRLEAEPEADLRPTLTGKPLSEEVREVLEQRDALYRETAHYIIDATKAPAQVVSEIIAALPPSTQRLQGDVYT.

12–17 (GCGKTT) is an ATP binding site. Mg(2+) is bound by residues threonine 16 and aspartate 32. Residues aspartate 34, arginine 58, and glycine 79 each contribute to the substrate site. The interval 112–126 (EAEPEADLRPTLTGK) is LID domain. Position 120 (arginine 120) interacts with ATP. Substrate is bound at residue arginine 139.

It belongs to the shikimate kinase family. AroL subfamily. As to quaternary structure, monomer. Requires Mg(2+) as cofactor.

The protein localises to the cytoplasm. The enzyme catalyses shikimate + ATP = 3-phosphoshikimate + ADP + H(+). Its pathway is metabolic intermediate biosynthesis; chorismate biosynthesis; chorismate from D-erythrose 4-phosphate and phosphoenolpyruvate: step 5/7. Its function is as follows. Catalyzes the specific phosphorylation of the 3-hydroxyl group of shikimic acid using ATP as a cosubstrate. The chain is Shikimate kinase 2 from Salmonella dublin (strain CT_02021853).